Consider the following 262-residue polypeptide: uncharacterized protein (262 aa).

Residues 1–211 form the Radical SAM core domain; sequence MAFHVMIIPS…LLYLLDSYLE (211 aa). Residues cysteine 13, cysteine 17, and cysteine 20 each contribute to the [4Fe-4S] cluster site.

This sequence belongs to the radical SAM superfamily. Anaerobic sulfatase-maturating enzyme family. The cofactor is [4Fe-4S] cluster.

This is an uncharacterized protein from Methanothermobacter thermautotrophicus (strain ATCC 29096 / DSM 1053 / JCM 10044 / NBRC 100330 / Delta H) (Methanobacterium thermoautotrophicum).